A 280-amino-acid polypeptide reads, in one-letter code: Bis(5'-nucleosyl)-tetraphosphatase, symmetrical (280 aa).

The protein belongs to the Ap4A hydrolase family.

It catalyses the reaction P(1),P(4)-bis(5'-adenosyl) tetraphosphate + H2O = 2 ADP + 2 H(+). In terms of biological role, hydrolyzes diadenosine 5',5'''-P1,P4-tetraphosphate to yield ADP. The polypeptide is Bis(5'-nucleosyl)-tetraphosphatase, symmetrical (Shigella flexneri serotype 5b (strain 8401)).